Here is a 734-residue protein sequence, read N- to C-terminus: 1,4-alpha-glucan branching enzyme GlgB (734 aa).

D413 acts as the Nucleophile in catalysis. E466 (proton donor) is an active-site residue.

It belongs to the glycosyl hydrolase 13 family. GlgB subfamily. In terms of assembly, monomer.

It catalyses the reaction Transfers a segment of a (1-&gt;4)-alpha-D-glucan chain to a primary hydroxy group in a similar glucan chain.. It participates in glycan biosynthesis; glycogen biosynthesis. In terms of biological role, catalyzes the formation of the alpha-1,6-glucosidic linkages in glycogen by scission of a 1,4-alpha-linked oligosaccharide from growing alpha-1,4-glucan chains and the subsequent attachment of the oligosaccharide to the alpha-1,6 position. The polypeptide is 1,4-alpha-glucan branching enzyme GlgB (Nitrosomonas europaea (strain ATCC 19718 / CIP 103999 / KCTC 2705 / NBRC 14298)).